A 591-amino-acid polypeptide reads, in one-letter code: V-type ATP synthase alpha chain (591 aa).

Residue 233 to 240 (GPFGAGKT) participates in ATP binding.

It belongs to the ATPase alpha/beta chains family.

It catalyses the reaction ATP + H2O + 4 H(+)(in) = ADP + phosphate + 5 H(+)(out). Its function is as follows. Produces ATP from ADP in the presence of a proton gradient across the membrane. The V-type alpha chain is a catalytic subunit. The chain is V-type ATP synthase alpha chain from Streptococcus pyogenes serotype M2 (strain MGAS10270).